The primary structure comprises 103 residues: NADH-ubiquinone oxidoreductase chain 4L (103 aa).

3 helical membrane-spanning segments follow: residues 6–26 (IFFL…GIFI), 31–51 (IIII…NFAI), and 65–85 (ILYT…ILII).

Belongs to the complex I subunit 4L family.

It localises to the mitochondrion membrane. It carries out the reaction a ubiquinone + NADH + 5 H(+)(in) = a ubiquinol + NAD(+) + 4 H(+)(out). Its function is as follows. Core subunit of the mitochondrial membrane respiratory chain NADH dehydrogenase (Complex I) that is believed to belong to the minimal assembly required for catalysis. Complex I functions in the transfer of electrons from NADH to the respiratory chain. The immediate electron acceptor for the enzyme is believed to be ubiquinone. In Acanthamoeba castellanii (Amoeba), this protein is NADH-ubiquinone oxidoreductase chain 4L (ND4L).